The following is an 805-amino-acid chain: Sucrose synthase (805 aa).

Residues 275 to 752 (MVFNVVILSP…GLKRIQEKYT (478 aa)) form a GT-B glycosyltransferase region.

It belongs to the glycosyltransferase 1 family. Plant sucrose synthase subfamily.

The catalysed reaction is an NDP-alpha-D-glucose + D-fructose = a ribonucleoside 5'-diphosphate + sucrose + H(+). Sucrose-cleaving enzyme that provides UDP-glucose and fructose for various metabolic pathways. This chain is Sucrose synthase, found in Solanum tuberosum (Potato).